The following is a 179-amino-acid chain: Pyridoxal 5'-phosphate synthase subunit PdxT (179 aa).

48–50 (GES) contacts L-glutamine. Cys-79 acts as the Nucleophile in catalysis. Residues Arg-101 and 127–128 (IR) contribute to the L-glutamine site. Catalysis depends on charge relay system residues His-163 and Glu-165.

The protein belongs to the glutaminase PdxT/SNO family. As to quaternary structure, in the presence of PdxS, forms a dodecamer of heterodimers. Only shows activity in the heterodimer.

It catalyses the reaction aldehydo-D-ribose 5-phosphate + D-glyceraldehyde 3-phosphate + L-glutamine = pyridoxal 5'-phosphate + L-glutamate + phosphate + 3 H2O + H(+). The catalysed reaction is L-glutamine + H2O = L-glutamate + NH4(+). The protein operates within cofactor biosynthesis; pyridoxal 5'-phosphate biosynthesis. Functionally, catalyzes the hydrolysis of glutamine to glutamate and ammonia as part of the biosynthesis of pyridoxal 5'-phosphate. The resulting ammonia molecule is channeled to the active site of PdxS. This Francisella tularensis subsp. tularensis (strain FSC 198) protein is Pyridoxal 5'-phosphate synthase subunit PdxT.